A 161-amino-acid polypeptide reads, in one-letter code: Nucleotide-binding protein BTH_I0730 (161 aa).

The protein belongs to the YajQ family.

Nucleotide-binding protein. The polypeptide is Nucleotide-binding protein BTH_I0730 (Burkholderia thailandensis (strain ATCC 700388 / DSM 13276 / CCUG 48851 / CIP 106301 / E264)).